The following is a 705-amino-acid chain: MLPREEKIIRERLGREPNEVEKAMLEVMWSEHVSYKSSRKWLKLLPTKNEHVILGPGEDAGVVKFDESTWIVIGIESHNHPSAVEPYGGAATGIGGIVRDILCMGARPIALLDPIRFGPLEKEKNRYLFEYVVKGIADYGNRIGVPTVGGETEFDESLDNYTLVNVVCVGIMKPEHLVHSYVTKPGLKLVLVGNRTGRDGIHGVTFASEELSENAEEEDRSAVQIPDPFTEKLLIEATLEAVYTGKVKALKDLGGGGLTCAASEMAGKKGLGAVIYADRVPLREPGMTPLEVMISESQERMLFAVEPEDVEELAKIFEKYELEWAVVGEIIEEPRFVVYWKGDKVADLPIELLTNVPTIEWPMKEYKLEEDVETPDIALSKAFDLVWSSPNIVAKRWVWEQYDHEVQGRTVVKPGFDAAVLKINGEYGLAITSDGNPSYCYLNPYHGAMGTVAEVVRNLVSVGAKPLALVDNLNFASPERPEVYWSFVETVKGLADAAKAFDLAYVSGNVSFYNEVVDRPVKPTPVVAGIGKVKLKDIPRGPRDGDVIALIGSTRRELGGSELYRVLGIKGGIAPRVNLEEEKGNALAILNLIENDLVTFVHDVSRGGVAVALAELSAWFNVGVKAKFTSSFKSIDFAFSESHGRYIITLPEDKVEEAKEIAKISIVGRVGGDNFALEVNGEKVEKDIEELSRIYWNYMYDLLEL.

His32 is a catalytic residue. ATP is bound at residue Tyr35. Glu76 is a Mg(2+) binding site. Substrate-binding positions include 77–80 (SHNH) and Arg99. Catalysis depends on His78, which acts as the Proton acceptor. Asp100 contacts Mg(2+). Residue Gln224 participates in substrate binding. Asp252 serves as a coordination point for Mg(2+). Substrate is bound at residue 296–298 (ESQ). 2 residues coordinate ATP: Asp471 and Gly508. Mg(2+) is bound at residue Asn509. Substrate is bound at residue Ser511.

Belongs to the FGAMS family. Monomer. Part of the FGAM synthase complex composed of 1 PurL, 1 PurQ and 2 PurS subunits.

The protein resides in the cytoplasm. The catalysed reaction is N(2)-formyl-N(1)-(5-phospho-beta-D-ribosyl)glycinamide + L-glutamine + ATP + H2O = 2-formamido-N(1)-(5-O-phospho-beta-D-ribosyl)acetamidine + L-glutamate + ADP + phosphate + H(+). It participates in purine metabolism; IMP biosynthesis via de novo pathway; 5-amino-1-(5-phospho-D-ribosyl)imidazole from N(2)-formyl-N(1)-(5-phospho-D-ribosyl)glycinamide: step 1/2. Its function is as follows. Part of the phosphoribosylformylglycinamidine synthase complex involved in the purines biosynthetic pathway. Catalyzes the ATP-dependent conversion of formylglycinamide ribonucleotide (FGAR) and glutamine to yield formylglycinamidine ribonucleotide (FGAM) and glutamate. The FGAM synthase complex is composed of three subunits. PurQ produces an ammonia molecule by converting glutamine to glutamate. PurL transfers the ammonia molecule to FGAR to form FGAM in an ATP-dependent manner. PurS interacts with PurQ and PurL and is thought to assist in the transfer of the ammonia molecule from PurQ to PurL. The chain is Phosphoribosylformylglycinamidine synthase subunit PurL from Pyrococcus abyssi (strain GE5 / Orsay).